The chain runs to 376 residues: Putative peptide import ATP-binding protein BMEII0205 (376 aa).

A disordered region spans residues 1-25; sequence MPLRPALHLRTGKLRQTPTHNEPDG. Positions 64–314 constitute an ABC transporter domain; the sequence is VRTDDLVRDF…PLHPYSRALL (251 aa). 106–113 provides a ligand contact to ATP; it reads GESGSGKS.

Belongs to the ABC transporter superfamily. In terms of assembly, the complex is composed of two ATP-binding proteins (BMEII0205 and BMEII0206), two transmembrane proteins (BMEII0207/BMEII0208 and BMEII0209) and a solute-binding protein (BMEII0210).

Its subcellular location is the cell inner membrane. Its function is as follows. Probably part of an ABC transporter complex that could be involved in peptide import. Probably responsible for energy coupling to the transport system. This is Putative peptide import ATP-binding protein BMEII0205 from Brucella melitensis biotype 1 (strain ATCC 23456 / CCUG 17765 / NCTC 10094 / 16M).